The sequence spans 149 residues: Large ribosomal subunit protein bL9 (149 aa).

Belongs to the bacterial ribosomal protein bL9 family.

Functionally, binds to the 23S rRNA. In Thermotoga maritima (strain ATCC 43589 / DSM 3109 / JCM 10099 / NBRC 100826 / MSB8), this protein is Large ribosomal subunit protein bL9.